We begin with the raw amino-acid sequence, 182 residues long: MGQESKPLIRSTTVLGVIRDGKAALGSDGQMTLGNTVLKHSTRKIRSLYHGRIITGFAGATADAVTLLDRFEEKLDAYGGKLERAAVELARDWRTDKYLRRLEAMLAVVSQDKALIISGTGDVIEPEDSIVAIGSGSMYALAAARSLLKHTPLSAREIVSESLKIAADICIYTNDHIVIEEL.

Thr-12 is an active-site residue. Residues Ala-167, Cys-170, and Thr-173 each coordinate Na(+).

This sequence belongs to the peptidase T1B family. HslV subfamily. As to quaternary structure, a double ring-shaped homohexamer of HslV is capped on each side by a ring-shaped HslU homohexamer. The assembly of the HslU/HslV complex is dependent on binding of ATP.

The protein resides in the cytoplasm. It carries out the reaction ATP-dependent cleavage of peptide bonds with broad specificity.. With respect to regulation, allosterically activated by HslU binding. Its function is as follows. Protease subunit of a proteasome-like degradation complex believed to be a general protein degrading machinery. In Chlorobium limicola (strain DSM 245 / NBRC 103803 / 6330), this protein is ATP-dependent protease subunit HslV.